We begin with the raw amino-acid sequence, 1163 residues long: DNA-directed RNA polymerase subunit beta 2 (1163 aa).

This sequence belongs to the RNA polymerase beta chain family. In terms of assembly, the RNAP catalytic core consists of 2 alpha, 1 beta, 1 beta' and 1 omega subunit. When a sigma factor is associated with the core the holoenzyme is formed, which can initiate transcription.

It carries out the reaction RNA(n) + a ribonucleoside 5'-triphosphate = RNA(n+1) + diphosphate. DNA-dependent RNA polymerase catalyzes the transcription of DNA into RNA using the four ribonucleoside triphosphates as substrates. This Nocardia farcinica (strain IFM 10152) protein is DNA-directed RNA polymerase subunit beta 2.